A 399-amino-acid chain; its full sequence is Serine/threonine-protein kinase PKZ1 (399 aa).

A disordered region spans residues Pro-30–Arg-50. One can recognise a Protein kinase domain in the interval Trp-92–Met-371. Residues Ile-98–Val-106 and Lys-121 each bind ATP. The Proton acceptor role is filled by Asp-219.

Belongs to the protein kinase superfamily. CAMK Ser/Thr protein kinase family. Interacts with BZP1.

The catalysed reaction is L-seryl-[protein] + ATP = O-phospho-L-seryl-[protein] + ADP + H(+). It carries out the reaction L-threonyl-[protein] + ATP = O-phospho-L-threonyl-[protein] + ADP + H(+). In terms of biological role, may regulate an early stage of the zoospore pathway. This chain is Serine/threonine-protein kinase PKZ1, found in Phytophthora infestans (Potato late blight agent).